We begin with the raw amino-acid sequence, 291 residues long: Elongation factor Ts (291 aa).

The tract at residues 78–81 is involved in Mg(2+) ion dislocation from EF-Tu; that stretch reads TDFV.

This sequence belongs to the EF-Ts family.

It is found in the cytoplasm. Functionally, associates with the EF-Tu.GDP complex and induces the exchange of GDP to GTP. It remains bound to the aminoacyl-tRNA.EF-Tu.GTP complex up to the GTP hydrolysis stage on the ribosome. This chain is Elongation factor Ts, found in Ureaplasma parvum serovar 3 (strain ATCC 27815 / 27 / NCTC 11736).